Reading from the N-terminus, the 789-residue chain is Glycerol-3-phosphate acyltransferase (789 aa).

The HXXXXD motif signature appears at 276–281 (HRSYID).

The protein belongs to the GPAT/DAPAT family.

The protein resides in the cell membrane. The catalysed reaction is sn-glycerol 3-phosphate + an acyl-CoA = a 1-acyl-sn-glycero-3-phosphate + CoA. Its pathway is phospholipid metabolism; CDP-diacylglycerol biosynthesis; CDP-diacylglycerol from sn-glycerol 3-phosphate: step 1/3. The polypeptide is Glycerol-3-phosphate acyltransferase (Mycobacterium bovis (strain ATCC BAA-935 / AF2122/97)).